The chain runs to 217 residues: Somatotropin (217 aa).

Positions 1 to 26 (MMAAGPRTSLLLAFALLCLPWTQVVG) are cleaved as a signal peptide. Histidine 46 serves as a coordination point for Zn(2+). Cysteine 79 and cysteine 190 are oxidised to a cystine. Residue serine 132 is modified to Phosphoserine. Glutamate 199 is a binding site for Zn(2+). A disulfide bridge links cysteine 207 with cysteine 215.

This sequence belongs to the somatotropin/prolactin family.

The protein resides in the secreted. Its function is as follows. Plays an important role in growth control. Its major role in stimulating body growth is to stimulate the liver and other tissues to secrete IGF1. It stimulates both the differentiation and proliferation of myoblasts. It also stimulates amino acid uptake and protein synthesis in muscle and other tissues. The polypeptide is Somatotropin (GH1) (Bubalus bubalis (Domestic water buffalo)).